The primary structure comprises 140 residues: Alpha-lactalbumin (140 aa).

Residues 1 to 19 (MMSLLPLLLIGIVLPATQA) form the signal peptide. The C-type lysozyme domain maps to 20–140 (KDYGKCELNQ…CRENLDQWNC (121 aa)). Cystine bridges form between cysteine 25–cysteine 140, cysteine 47–cysteine 131, cysteine 80–cysteine 96, and cysteine 92–cysteine 110. Ca(2+) contacts are provided by lysine 98, aspartate 101, aspartate 103, aspartate 106, and aspartate 107.

In terms of assembly, lactose synthase (LS) is a heterodimer of a catalytic component, beta1,4-galactosyltransferase (beta4Gal-T1) and a regulatory component, alpha-lactalbumin (LA). Mammary gland specific. Secreted in milk.

It localises to the secreted. Regulatory subunit of lactose synthase, changes the substrate specificity of galactosyltransferase in the mammary gland making glucose a good acceptor substrate for this enzyme. This enables LS to synthesize lactose, the major carbohydrate component of milk. In other tissues, galactosyltransferase transfers galactose onto the N-acetylglucosamine of the oligosaccharide chains in glycoproteins. The protein is Alpha-lactalbumin (LALBA) of Trichosurus vulpecula (Brush-tailed possum).